The primary structure comprises 356 residues: tRNA N6-adenosine threonylcarbamoyltransferase (356 aa).

His115 and His119 together coordinate Fe cation. Substrate-binding positions include 138-142, Asp171, Gly184, and Asn283; that span reads LVSGG. Residue Asp311 participates in Fe cation binding.

It belongs to the KAE1 / TsaD family. The cofactor is Fe(2+).

The protein resides in the cytoplasm. The enzyme catalyses L-threonylcarbamoyladenylate + adenosine(37) in tRNA = N(6)-L-threonylcarbamoyladenosine(37) in tRNA + AMP + H(+). In terms of biological role, required for the formation of a threonylcarbamoyl group on adenosine at position 37 (t(6)A37) in tRNAs that read codons beginning with adenine. Is involved in the transfer of the threonylcarbamoyl moiety of threonylcarbamoyl-AMP (TC-AMP) to the N6 group of A37, together with TsaE and TsaB. TsaD likely plays a direct catalytic role in this reaction. The sequence is that of tRNA N6-adenosine threonylcarbamoyltransferase from Prochlorococcus marinus (strain MIT 9215).